A 1120-amino-acid chain; its full sequence is Transcription-repair-coupling factor (1120 aa).

The 166-residue stretch at D591–I756 folds into the Helicase ATP-binding domain. Residue G604 to T611 participates in ATP binding. The short motif at D709–Q712 is the DEEQ box element. Residues I777–R933 form the Helicase C-terminal domain.

The protein in the N-terminal section; belongs to the UvrB family. This sequence in the C-terminal section; belongs to the helicase family. RecG subfamily.

The protein localises to the cytoplasm. In terms of biological role, couples transcription and DNA repair by recognizing RNA polymerase (RNAP) stalled at DNA lesions. Mediates ATP-dependent release of RNAP and its truncated transcript from the DNA, and recruitment of nucleotide excision repair machinery to the damaged site. This Rickettsia prowazekii (strain Madrid E) protein is Transcription-repair-coupling factor.